Here is a 206-residue protein sequence, read N- to C-terminus: High frequency lysogenization protein HflD homolog (206 aa).

It belongs to the HflD family.

It localises to the cytoplasm. The protein localises to the cell inner membrane. This chain is High frequency lysogenization protein HflD homolog, found in Pseudomonas aeruginosa (strain LESB58).